The primary structure comprises 124 residues: Urease subunit beta (124 aa).

It belongs to the urease beta subunit family. As to quaternary structure, heterotrimer of UreA (gamma), UreB (beta) and UreC (alpha) subunits. Three heterotrimers associate to form the active enzyme.

The protein resides in the cytoplasm. It carries out the reaction urea + 2 H2O + H(+) = hydrogencarbonate + 2 NH4(+). Its pathway is nitrogen metabolism; urea degradation; CO(2) and NH(3) from urea (urease route): step 1/1. The polypeptide is Urease subunit beta (Ureaplasma parvum serovar 3 (strain ATCC 27815 / 27 / NCTC 11736)).